Here is a 156-residue protein sequence, read N- to C-terminus: Ribosomal RNA large subunit methyltransferase H (156 aa).

S-adenosyl-L-methionine is bound by residues Leu73, Gly104, and 123–128; that span reads LSAMTL.

It belongs to the RNA methyltransferase RlmH family. Homodimer.

The protein localises to the cytoplasm. It catalyses the reaction pseudouridine(1915) in 23S rRNA + S-adenosyl-L-methionine = N(3)-methylpseudouridine(1915) in 23S rRNA + S-adenosyl-L-homocysteine + H(+). Its function is as follows. Specifically methylates the pseudouridine at position 1915 (m3Psi1915) in 23S rRNA. This chain is Ribosomal RNA large subunit methyltransferase H, found in Laribacter hongkongensis (strain HLHK9).